The sequence spans 591 residues: Polyphenol oxidase D, chloroplastic (591 aa).

The transit peptide at 1–83 (MASLCSNSST…ANAIPLAASA (83 aa)) directs the protein to the chloroplast. 2 disulfides stabilise this stretch: C94–C110 and C109–C177. 6 residues coordinate Cu cation: H176, H194, H203, H324, H328, and H366. The segment at residues 180-194 (CNGAYRIGGKELQVH) is a cross-link (2'-(S-cysteinyl)-histidine (Cys-His)).

The protein belongs to the tyrosinase family. Cu(2+) is required as a cofactor.

The protein resides in the plastid. The protein localises to the chloroplast thylakoid lumen. The catalysed reaction is 2 catechol + O2 = 2 1,2-benzoquinone + 2 H2O. Catalyzes the oxidation of mono- and o-diphenols to o-diquinones. This is Polyphenol oxidase D, chloroplastic from Solanum lycopersicum (Tomato).